Reading from the N-terminus, the 394-residue chain is DNA primase large subunit PriL (394 aa).

Cys-231, Cys-340, Cys-351, and Cys-357 together coordinate [4Fe-4S] cluster.

This sequence belongs to the eukaryotic-type primase large subunit family. In terms of assembly, heterodimer of a small subunit (PriS) and a large subunit (PriL). The cofactor is [4Fe-4S] cluster.

Regulatory subunit of DNA primase, an RNA polymerase that catalyzes the synthesis of short RNA molecules used as primers for DNA polymerase during DNA replication. Stabilizes and modulates the activity of the small subunit, increasing the rate of DNA synthesis, and conferring RNA synthesis capability. The DNA polymerase activity may enable DNA primase to also catalyze primer extension after primer synthesis. May also play a role in DNA repair. The protein is DNA primase large subunit PriL of Pyrococcus horikoshii (strain ATCC 700860 / DSM 12428 / JCM 9974 / NBRC 100139 / OT-3).